Consider the following 251-residue polypeptide: Hydroxyacylglutathione hydrolase (251 aa).

Residues His53, His55, Asp57, His58, His110, Asp127, and His165 each coordinate Zn(2+).

This sequence belongs to the metallo-beta-lactamase superfamily. Glyoxalase II family. In terms of assembly, monomer. Zn(2+) serves as cofactor.

It catalyses the reaction an S-(2-hydroxyacyl)glutathione + H2O = a 2-hydroxy carboxylate + glutathione + H(+). It functions in the pathway secondary metabolite metabolism; methylglyoxal degradation; (R)-lactate from methylglyoxal: step 2/2. Its function is as follows. Thiolesterase that catalyzes the hydrolysis of S-D-lactoyl-glutathione to form glutathione and D-lactic acid. The protein is Hydroxyacylglutathione hydrolase of Shigella dysenteriae serotype 1 (strain Sd197).